We begin with the raw amino-acid sequence, 247 residues long: Proteasome subunit alpha (247 aa).

It belongs to the peptidase T1A family. In terms of assembly, the 20S proteasome core is composed of 14 alpha and 14 beta subunits that assemble into four stacked heptameric rings, resulting in a barrel-shaped structure. The two inner rings, each composed of seven catalytic beta subunits, are sandwiched by two outer rings, each composed of seven alpha subunits. The catalytic chamber with the active sites is on the inside of the barrel. Has a gated structure, the ends of the cylinder being occluded by the N-termini of the alpha-subunits. Is capped at one or both ends by the proteasome regulatory ATPase, PAN.

The protein localises to the cytoplasm. The formation of the proteasomal ATPase PAN-20S proteasome complex, via the docking of the C-termini of PAN into the intersubunit pockets in the alpha-rings, triggers opening of the gate for substrate entry. Interconversion between the open-gate and close-gate conformations leads to a dynamic regulation of the 20S proteasome proteolysis activity. Functionally, component of the proteasome core, a large protease complex with broad specificity involved in protein degradation. The polypeptide is Proteasome subunit alpha (Methanosarcina thermophila).